The sequence spans 156 residues: Peptide deformylase (156 aa).

Fe cation contacts are provided by Cys90 and His132. Glu133 is an active-site residue. His136 is a binding site for Fe cation.

This sequence belongs to the polypeptide deformylase family. Fe(2+) serves as cofactor.

It catalyses the reaction N-terminal N-formyl-L-methionyl-[peptide] + H2O = N-terminal L-methionyl-[peptide] + formate. Functionally, removes the formyl group from the N-terminal Met of newly synthesized proteins. Requires at least a dipeptide for an efficient rate of reaction. N-terminal L-methionine is a prerequisite for activity but the enzyme has broad specificity at other positions. The polypeptide is Peptide deformylase (Natranaerobius thermophilus (strain ATCC BAA-1301 / DSM 18059 / JW/NM-WN-LF)).